We begin with the raw amino-acid sequence, 486 residues long: Siroheme synthase (486 aa).

A precorrin-2 dehydrogenase /sirohydrochlorin ferrochelatase region spans residues 1 to 204 (MNYLPIFVDL…HQIEQAEALV (204 aa)). Residues 22–23 (HI) and 43–44 (EK) each bind NAD(+). Residue S128 is modified to Phosphoserine. Positions 216–486 (GEVSLVGAGP…NKETHWKQAA (271 aa)) are uroporphyrinogen-III C-methyltransferase. Residue P225 participates in S-adenosyl-L-methionine binding. Catalysis depends on D248, which acts as the Proton acceptor. K270 acts as the Proton donor in catalysis. S-adenosyl-L-methionine-binding positions include 301–303 (GGD), V306, 331–332 (TA), M383, and G412.

It in the N-terminal section; belongs to the precorrin-2 dehydrogenase / sirohydrochlorin ferrochelatase family. This sequence in the C-terminal section; belongs to the precorrin methyltransferase family.

The catalysed reaction is uroporphyrinogen III + 2 S-adenosyl-L-methionine = precorrin-2 + 2 S-adenosyl-L-homocysteine + H(+). It carries out the reaction precorrin-2 + NAD(+) = sirohydrochlorin + NADH + 2 H(+). The enzyme catalyses siroheme + 2 H(+) = sirohydrochlorin + Fe(2+). It participates in cofactor biosynthesis; adenosylcobalamin biosynthesis; precorrin-2 from uroporphyrinogen III: step 1/1. Its pathway is cofactor biosynthesis; adenosylcobalamin biosynthesis; sirohydrochlorin from precorrin-2: step 1/1. The protein operates within porphyrin-containing compound metabolism; siroheme biosynthesis; precorrin-2 from uroporphyrinogen III: step 1/1. It functions in the pathway porphyrin-containing compound metabolism; siroheme biosynthesis; siroheme from sirohydrochlorin: step 1/1. It participates in porphyrin-containing compound metabolism; siroheme biosynthesis; sirohydrochlorin from precorrin-2: step 1/1. Functionally, multifunctional enzyme that catalyzes the SAM-dependent methylations of uroporphyrinogen III at position C-2 and C-7 to form precorrin-2 via precorrin-1. Then it catalyzes the NAD-dependent ring dehydrogenation of precorrin-2 to yield sirohydrochlorin. Finally, it catalyzes the ferrochelation of sirohydrochlorin to yield siroheme. The polypeptide is Siroheme synthase (Actinobacillus pleuropneumoniae serotype 3 (strain JL03)).